The chain runs to 499 residues: MNQPAPAALLPPRRVRLKPWLVAQVNSCQYPGLQWVNGEKKLFYIPWRHATRHGPSHDGDNTIFKAWAKETGKYTEGVDEADPAKWKANLRCALNKSRDFRLIYDGPRDMPPQPYKVYEVCSNGPAPAESQPSEDNAEEEEEEELQKMLPGLSITEAVQPGPAMAPYSLPKEDVKWPPTLQPPVVLAPPAPGPNLLVPAPGNAADFGEVFSEVLPSSQPQPGSLSTSLAPTGEQLLPDLLISPHMLPLTDLEIKFQYRGRPPRALTISNPQSCRLLYSQLEATQEQVELFGPVSLEQVRFPSPEDIPSEKQRFYTNQLLDVLDRGLILQIQGQDLYAIRLCQCKVFWSGPCASAQGSHPNPIQREVKTKLFSLEDFLNELILFQKGQTNTPPPFEIFFCFGEEWPDCKPREKKLITVQVVPVAARMLLEMFSGELSWSADSIRLQISNPDLKDRMVEQFKELHHIWLSQQHLQPVAQTPAMPGLSAAQGPWPMHPVGMQ.

Positions 12–18 (PRRVRLK) match the Nuclear localization signal motif. Positions 14–122 (RVRLKPWLVA…QPYKVYEVCS (109 aa)) form a DNA-binding region, IRF tryptophan pentad repeat. Residues 121–142 (CSNGPAPAESQPSEDNAEEEEE) are disordered. A Nuclear export signal motif is present at residues 145-155 (LQKMLPGLSIT). Phosphoserine; by TBK1 occurs at positions 153 and 294. Position 302 is a phosphoserine (Ser302). Glycyl lysine isopeptide (Lys-Gly) (interchain with G-Cter in ubiquitin) cross-links involve residues Lys412 and Lys413. A phosphoserine mark is found at Ser432, Ser436, Ser438, Ser441, and Ser447.

It belongs to the IRF family. As to quaternary structure, homodimer, when phosphorylated. Interacts with TASL (via pLxIS motif); interaction takes place downstream of TLR7, TLR8 or TLR9, leading to its activation. Interacts with MYD88 and TRAF6. Post-translationally, phosphorylation of serine and threonine residues by IKBKB in a C-terminal autoinhibitory region, stimulates dimerization, transport into the nucleus, assembly with the coactivator CBP/EP300 and initiation of transcription. 'Lys-63'-linked polyubiquitination by TRAF6 is required for activation.

The protein resides in the cytoplasm. Its subcellular location is the nucleus. With respect to regulation, maintained as a monomer in an autoinhibited state. Phosphorylation and activation follow the following steps: innate adapter protein TASL recruits IRF5, thereby licensing IRF5 for phosphorylation by IKBKB. Phosphorylated IRF5 dissociates from the adapter proteins, dimerizes, and then enters the nucleus to induce IFNs. Its function is as follows. Transcription factor that plays a critical role in innate immunity by activating expression of type I interferon (IFN) IFNA and INFB and inflammatory cytokines downstream of endolysosomal toll-like receptors TLR7, TLR8 and TLR9. Regulates the transcription of type I IFN genes (IFN-alpha and IFN-beta) and IFN-stimulated genes (ISG) by binding to an interferon-stimulated response element (ISRE) in their promoters. Can efficiently activate both the IFN-beta (IFNB) and the IFN-alpha (IFNA) genes and mediate their induction downstream of the TLR-activated, MyD88-dependent pathway. In Bos taurus (Bovine), this protein is Interferon regulatory factor 5.